The following is a 630-amino-acid chain: 1-deoxy-D-xylulose-5-phosphate synthase (630 aa).

Residues His-75 and 116 to 118 (GHS) contribute to the thiamine diphosphate site. Residue Asp-147 coordinates Mg(2+). Residues 148–149 (GA), Asn-176, Tyr-287, and Glu-367 each bind thiamine diphosphate. Residue Asn-176 participates in Mg(2+) binding.

It belongs to the transketolase family. DXPS subfamily. In terms of assembly, homodimer. It depends on Mg(2+) as a cofactor. Thiamine diphosphate is required as a cofactor.

It catalyses the reaction D-glyceraldehyde 3-phosphate + pyruvate + H(+) = 1-deoxy-D-xylulose 5-phosphate + CO2. The protein operates within metabolic intermediate biosynthesis; 1-deoxy-D-xylulose 5-phosphate biosynthesis; 1-deoxy-D-xylulose 5-phosphate from D-glyceraldehyde 3-phosphate and pyruvate: step 1/1. Its function is as follows. Catalyzes the acyloin condensation reaction between C atoms 2 and 3 of pyruvate and glyceraldehyde 3-phosphate to yield 1-deoxy-D-xylulose-5-phosphate (DXP). The sequence is that of 1-deoxy-D-xylulose-5-phosphate synthase from Treponema pallidum (strain Nichols).